The chain runs to 181 residues: Akirin-2 (181 aa).

The interval 18–48 (SPAASPKRRRCAPLSPSGPSPQKYLRLEPSP) is disordered. The Nuclear localization signal signature appears at 23 to 28 (PKRRRC). An SYVS motif motif is present at residues 178–181 (SYVS).

This sequence belongs to the akirin family. Homodimer. Interacts with actl6a/baf53a. Interacts with gmnn.

Its subcellular location is the nucleus. In terms of biological role, molecular adapter that acts as a bridge between a variety of multiprotein complexes, and which is involved in embryonic development, immunity, myogenesis and brain development. Plays a key role in nuclear protein degradation by promoting import of proteasomes into the nucleus: acts by bridging fully assembled 20S proteasomes with nuclear import receptor ipo9. Involved in both neural precursor maintenance and terminal neural differentiation: bridges gmnn and actl6a/baf53a in neural progenitor cells, antagonizing the activity of gmnn, thereby suppressing sox2 expression. Also required for proper activation of neurod1 and neuronal differentiation. Involved in myogenesis: required for skeletal muscle formation and skeletal development, possibly by regulating expression of muscle differentiation factors. This Xenopus laevis (African clawed frog) protein is Akirin-2.